We begin with the raw amino-acid sequence, 448 residues long: Glucose-6-phosphate isomerase (448 aa).

Glu291 serves as the catalytic Proton donor. Active-site residues include His312 and Lys425.

It belongs to the GPI family.

The protein resides in the cytoplasm. It carries out the reaction alpha-D-glucose 6-phosphate = beta-D-fructose 6-phosphate. It functions in the pathway carbohydrate biosynthesis; gluconeogenesis. The protein operates within carbohydrate degradation; glycolysis; D-glyceraldehyde 3-phosphate and glycerone phosphate from D-glucose: step 2/4. Functionally, catalyzes the reversible isomerization of glucose-6-phosphate to fructose-6-phosphate. In Symbiobacterium thermophilum (strain DSM 24528 / JCM 14929 / IAM 14863 / T), this protein is Glucose-6-phosphate isomerase.